Here is a 1118-residue protein sequence, read N- to C-terminus: Sodium-driven chloride bicarbonate exchanger (1118 aa).

Disordered regions lie at residues 1–23 (MEIK…EEAV), 58–96 (GRKS…DTPS), 245–312 (KQSE…PPHQ), and 457–476 (NGTA…GPEL). Residues 1 to 509 (MEIKDQGAQM…DFRDAFSLQC (509 aa)) lie on the Cytoplasmic side of the membrane. Residues 59–76 (RKSHRRHRHRGHKHRKRD) show a composition bias toward basic residues. Positions 77–90 (RERDSGLEDGRESP) are enriched in basic and acidic residues. Position 89 is a phosphoserine (Ser-89). At Thr-94 the chain carries Phosphothreonine. The span at 248 to 264 (EPNSMDKNAGQVVSPQS) shows a compositional bias: polar residues. The residue at position 276 (Ser-276) is a Phosphoserine. Residues 510 to 530 (LASFLFLYCACMSPVITFGGL) form a helical membrane-spanning segment. Over 531 to 538 (LGEATEGR) the chain is Extracellular. A helical transmembrane segment spans residues 539-559 (ISAIESLFGASMTGIAYSLFG). Over 560–562 (GQP) the chain is Cytoplasmic. The helical transmembrane segment at 563 to 583 (LTILGSTGPVLVFEKILFKFC) threads the bilayer. Residues 584-596 (KEYGLSYLSLRAS) are Extracellular-facing. A helical transmembrane segment spans residues 597–617 (IGLWTATLCIILVATDASSLV). At 618 to 626 (CYITRFTEE) the chain is on the cytoplasmic side. The chain crosses the membrane as a helical span at residues 627–647 (AFASLICIIFIYEALEKLFEL). At 648–720 (SEAYPINMHN…VGRACGHDHP (73 aa)) the chain is on the extracellular side. Residues Asn-674, Asn-677, Asn-687, and Asn-697 are each glycosylated (N-linked (GlcNAc...) asparagine). A helical transmembrane segment spans residues 721 to 741 (YVPDVLFWSVILFFSTVTLSA). The Cytoplasmic segment spans residues 742–762 (TLKQFKTSRYFPTKVRSIVSD). Residues 763 to 783 (FAVFLTILCMVLIDYAIGIPS) form a helical membrane-spanning segment. Topologically, residues 784-809 (PKLQVPSVFKPTRDDRGWFVTPLGPN) are extracellular. Residues 810–830 (PWWTVIAAIIPALLCTILIFM) traverse the membrane as a helical segment. The Cytoplasmic portion of the chain corresponds to 831-855 (DQQITAVIINRKEHKLKKGCGYHLD). Residues 856-876 (LLMVAVMLGVCSIMGLPWFVA) form a helical membrane-spanning segment. Topologically, residues 877–912 (ATVLSITHVNSLKLESECSAPGEQPKFLGIREQRVT) are extracellular. Residues 913–933 (GLMIFILMGSSVFMTSILKFI) traverse the membrane as a helical segment. Residues 934 to 935 (PM) are Cytoplasmic-facing. The helical transmembrane segment at 936 to 956 (PVLYGVFLYMGASSLKGIQFF) threads the bilayer. The Extracellular segment spans residues 957–998 (DRIKLFWMPAKHQPDFIYLRHVPLRKVHLFTIIQMSCLGLLW). Residues 999 to 1019 (IIKVSRAAIVFPMMVLALVFV) traverse the membrane as a helical segment. Residues 1020-1118 (RKLMDLLFTK…SSFPSKSSPS (99 aa)) are Cytoplasmic-facing. Phosphoserine occurs at positions 1057 and 1085.

This sequence belongs to the anion exchanger (TC 2.A.31) family. As to expression, predominantly expressed in the brain.

It localises to the basolateral cell membrane. Its subcellular location is the apical cell membrane. The protein localises to the cell projection. The protein resides in the dendrite. It is found in the axon. It localises to the perikaryon. Its subcellular location is the presynapse. The protein localises to the postsynapse. The catalysed reaction is 2 hydrogencarbonate(out) + chloride(in) + Na(+)(out) = 2 hydrogencarbonate(in) + chloride(out) + Na(+)(in). Its function is as follows. Sodium/bicarbonate cotransporter which plays an important role in regulating intracellular pH. Has been shown to act as a sodium/bicarbonate cotransporter in exchange for intracellular chloride. Has also been shown to act as a sodium/biocarbonate cotransporter which does not couple net influx of bicarbonate to net efflux of chloride, with the observed chloride efflux being due to chloride self-exchange. Controls neuronal pH and may contribute to the secretion of cerebrospinal fluid. Acting on presynaptic intracellular pH, it promotes GABA release, reduces the excitability of CA1 pyramidal neurons, and modulates short-term synaptic plasticity. Required in retinal cells to maintain normal pH which is necessary for normal vision. In the kidney, likely to mediate bicarbonate reclamation in the apical membrane of the proximal tubules. This chain is Sodium-driven chloride bicarbonate exchanger, found in Homo sapiens (Human).